Here is a 314-residue protein sequence, read N- to C-terminus: Polyamine aminopropyltransferase (314 aa).

One can recognise a PABS domain in the interval 4–241 (GMYFFEHVTP…LNFGFLLASD (238 aa)). Position 33 (Gln-33) interacts with S-methyl-5'-thioadenosine. Residues His-64 and Glu-88 each coordinate spermidine. Residues Asp-108 and 140–141 (DA) contribute to the S-methyl-5'-thioadenosine site. Asp-158 acts as the Proton acceptor in catalysis. Pro-168 is a binding site for S-methyl-5'-thioadenosine.

This sequence belongs to the spermidine/spermine synthase family. Homodimer or homotetramer.

The protein localises to the cytoplasm. It carries out the reaction S-adenosyl 3-(methylsulfanyl)propylamine + putrescine = S-methyl-5'-thioadenosine + spermidine + H(+). Its pathway is amine and polyamine biosynthesis; spermidine biosynthesis; spermidine from putrescine: step 1/1. Functionally, catalyzes the irreversible transfer of a propylamine group from the amino donor S-adenosylmethioninamine (decarboxy-AdoMet) to putrescine (1,4-diaminobutane) to yield spermidine. The protein is Polyamine aminopropyltransferase of Thermus thermophilus (strain ATCC BAA-163 / DSM 7039 / HB27).